Reading from the N-terminus, the 208-residue chain is MERLLVLARHGQSEWNLKNLFTGWRDPDLTEVGIAEARAAGRRLKAKGIRFDICFTSALTRAQRTAALILEELGQPDLPTIADEALNERDYGDLSGLNKDDARARWGKDQVHIWRRSYDVPPPGGESLKDTVARVLPYTMREILPRVMRGERVLVAAHGNSLRALVMVLDGLTTETIPGLELWTGVPLVYRLKADTTVESKEVLDKDA.

Substrate contacts are provided by residues 9-16 (RHGQSEWN), 22-23 (TG), R61, 88-91 (ERDY), K99, 115-116 (RR), and 159-160 (GN). H10 functions as the Tele-phosphohistidine intermediate in the catalytic mechanism. The active-site Proton donor/acceptor is E88.

This sequence belongs to the phosphoglycerate mutase family. BPG-dependent PGAM subfamily. Homodimer.

It carries out the reaction (2R)-2-phosphoglycerate = (2R)-3-phosphoglycerate. The protein operates within carbohydrate degradation; glycolysis; pyruvate from D-glyceraldehyde 3-phosphate: step 3/5. Its function is as follows. Catalyzes the interconversion of 2-phosphoglycerate and 3-phosphoglycerate. This is 2,3-bisphosphoglycerate-dependent phosphoglycerate mutase from Methylobacterium sp. (strain 4-46).